The following is a 329-amino-acid chain: BRISC and BRCA1-A complex member 1 (329 aa).

M1 is modified (N-acetylmethionine). Residues 1–84 (MEVAEPSSPT…VPPPAPEVQI (84 aa)) form a disordered region. Position 8 is a phosphoserine (S8). Over residues 10 to 19 (TEEEEEEEEH) the composition is skewed to acidic residues. A phosphoserine mark is found at S29, S49, S57, and S62. T65 is subject to Phosphothreonine. S66 is modified (phosphoserine). The VWFA-like stretch occupies residues 95-298 (VIICLDLSEE…LELHNCMAKL (204 aa)).

The protein belongs to the BABAM1 family. In terms of assembly, component of the ARISC complex, at least composed of UIMC1/RAP80, ABRAXAS1, BRCC3/BRCC36, BABAM2 and BABAM1/NBA1. Component of the BRCA1-A complex, at least composed of BRCA1, BARD1, UIMC1/RAP80, ABRAXAS1, BRCC3/BRCC36, BABAM2 and BABAM1/NBA1. In the BRCA1-A complex, interacts directly with ABRAXAS1 and BABAM2. Component of the BRISC complex, at least composed of ABRAXAS2, BRCC3/BRCC36, BABAM2 and BABAM1/NBA1. Identified in a complex with SHMT2 and the other subunits of the BRISC complex.

The protein resides in the cytoplasm. The protein localises to the nucleus. Functionally, component of the BRCA1-A complex, a complex that specifically recognizes 'Lys-63'-linked ubiquitinated histones H2A and H2AX at DNA lesions sites, leading to target the BRCA1-BARD1 heterodimer to sites of DNA damage at double-strand breaks (DSBs). The BRCA1-A complex also possesses deubiquitinase activity that specifically removes 'Lys-63'-linked ubiquitin on histones H2A and H2AX. In the BRCA1-A complex, it is required for the complex integrity and its localization at DSBs. Component of the BRISC complex, a multiprotein complex that specifically cleaves 'Lys-63'-linked ubiquitin in various substrates. In these 2 complexes, it is probably required to maintain the stability of BABAM2 and help the 'Lys-63'-linked deubiquitinase activity mediated by BRCC3/BRCC36 component. The BRISC complex is required for normal mitotic spindle assembly and microtubule attachment to kinetochores via its role in deubiquitinating NUMA1. Plays a role in interferon signaling via its role in the deubiquitination of the interferon receptor IFNAR1; deubiquitination increases IFNAR1 activity by enhancing its stability and cell surface expression. Down-regulates the response to bacterial lipopolysaccharide (LPS) via its role in IFNAR1 deubiquitination. The chain is BRISC and BRCA1-A complex member 1 (BABAM1) from Homo sapiens (Human).